The sequence spans 443 residues: MTTQTSTKYSIEVVDYDADLVLQCATIQSTFESPSRDSARSKVSITTETEEKSEDELRSIRGTVVESTTQKPIIQGSFFPYEFSEHEQEELKEKMAQLNHCLEDCELDYSFEGTIIRVFYYKKWYISTHRKLNADRSKWGSNVSFKRLFEQGLADSYGLSLNELYQQLNLRCNYTFLITADENTRFVCVPNTAKKVYFIRSNDPQERFITVAKPPKPPQSLTRVEQIFAWVKALQYPYTYQGLLLTHKSGSQYRIINNEYATLFKVRNNEQSIPYRYLQLRVAQDDASIALLKQLFPQYTATFQSHEQSVDWLVDVIYHEYTKRKQRSLLPSDLTTTPQIDQRMYLFIKNKLINKGVITKERIKALLWMEEPSNLNQMIRLVNHMRHVREKSRSPQLEADLARLNLNSSPNTTLPDGDGVPKRKKIKYSKIPVELTFKKPSPF.

Residues 82–110 are a coiled coil; the sequence is EFSEHEQEELKEKMAQLNHCLEDCELDYS.

This sequence belongs to the IIV-6 393L family.

This is Immediate-early protein ICP-46 homolog from Aedes vexans (Inland floodwater mosquito).